A 462-amino-acid chain; its full sequence is Argininosuccinate lyase (462 aa).

Belongs to the lyase 1 family. Argininosuccinate lyase subfamily.

The protein localises to the cytoplasm. It carries out the reaction 2-(N(omega)-L-arginino)succinate = fumarate + L-arginine. Its pathway is amino-acid biosynthesis; L-arginine biosynthesis; L-arginine from L-ornithine and carbamoyl phosphate: step 3/3. This chain is Argininosuccinate lyase, found in Methylobacterium nodulans (strain LMG 21967 / CNCM I-2342 / ORS 2060).